The following is a 311-amino-acid chain: Aspartate carbamoyltransferase catalytic subunit (311 aa).

Residues arginine 59 and threonine 60 each coordinate carbamoyl phosphate. Residue lysine 87 coordinates L-aspartate. The carbamoyl phosphate site is built by arginine 109, histidine 139, and glutamine 142. L-aspartate-binding residues include arginine 172 and arginine 224. Residues alanine 265 and proline 266 each contribute to the carbamoyl phosphate site.

Belongs to the aspartate/ornithine carbamoyltransferase superfamily. ATCase family. As to quaternary structure, heterododecamer (2C3:3R2) of six catalytic PyrB chains organized as two trimers (C3), and six regulatory PyrI chains organized as three dimers (R2).

The catalysed reaction is carbamoyl phosphate + L-aspartate = N-carbamoyl-L-aspartate + phosphate + H(+). Its pathway is pyrimidine metabolism; UMP biosynthesis via de novo pathway; (S)-dihydroorotate from bicarbonate: step 2/3. Its function is as follows. Catalyzes the condensation of carbamoyl phosphate and aspartate to form carbamoyl aspartate and inorganic phosphate, the committed step in the de novo pyrimidine nucleotide biosynthesis pathway. The sequence is that of Aspartate carbamoyltransferase catalytic subunit from Streptococcus pyogenes serotype M1.